The chain runs to 321 residues: Ribosomal protein L11 methyltransferase (321 aa).

Residues Thr150, Gly171, Asp193, and Asn256 each coordinate S-adenosyl-L-methionine.

It belongs to the methyltransferase superfamily. PrmA family.

Its subcellular location is the cytoplasm. It catalyses the reaction L-lysyl-[protein] + 3 S-adenosyl-L-methionine = N(6),N(6),N(6)-trimethyl-L-lysyl-[protein] + 3 S-adenosyl-L-homocysteine + 3 H(+). In terms of biological role, methylates ribosomal protein L11. This chain is Ribosomal protein L11 methyltransferase, found in Herpetosiphon aurantiacus (strain ATCC 23779 / DSM 785 / 114-95).